Reading from the N-terminus, the 476-residue chain is Ubiquitin-conjugating enzyme E2 variant 3 (476 aa).

The region spanning Glu-2–Ser-145 is the UEV domain. Residue Gly-185–Glu-213 coordinates NAD(+).

The protein in the N-terminal section; belongs to the ubiquitin-conjugating enzyme family. UEV subfamily. In the C-terminal section; belongs to the LDH/MDH superfamily. As to quaternary structure, homodimer.

In terms of biological role, possible negative regulator of polyubiquitination. In Xenopus tropicalis (Western clawed frog), this protein is Ubiquitin-conjugating enzyme E2 variant 3 (uevld).